The following is a 168-amino-acid chain: DOMON domain-containing protein CBG21753 (168 aa).

Positions 1–17 (MIKSMILVALILAFASA) are cleaved as a signal peptide. Residues 25-143 (SGFQSYWRFA…CQKWRWIKSG (119 aa)) enclose the DOMON domain. Residues N35 and N94 are each glycosylated (N-linked (GlcNAc...) asparagine). The tract at residues 148-168 (GQLTRNSKSPKDKKVCPMECN) is disordered. Positions 156 to 168 (SPKDKKVCPMECN) are enriched in basic and acidic residues.

It is found in the secreted. This chain is DOMON domain-containing protein CBG21753, found in Caenorhabditis briggsae.